Here is a 251-residue protein sequence, read N- to C-terminus: Hydroxyacylglutathione hydrolase (251 aa).

Positions 53, 55, 57, 58, 110, 127, and 165 each coordinate Zn(2+).

It belongs to the metallo-beta-lactamase superfamily. Glyoxalase II family. Monomer. Zn(2+) is required as a cofactor.

The enzyme catalyses an S-(2-hydroxyacyl)glutathione + H2O = a 2-hydroxy carboxylate + glutathione + H(+). The protein operates within secondary metabolite metabolism; methylglyoxal degradation; (R)-lactate from methylglyoxal: step 2/2. Its function is as follows. Thiolesterase that catalyzes the hydrolysis of S-D-lactoyl-glutathione to form glutathione and D-lactic acid. This chain is Hydroxyacylglutathione hydrolase, found in Escherichia coli O81 (strain ED1a).